A 187-amino-acid chain; its full sequence is Putative manganese efflux pump MntP (187 aa).

6 helical membrane passes run 3 to 23, 41 to 61, 62 to 82, 107 to 129, 143 to 163, and 166 to 186; these read MSAT…ASIG, LIFG…GFFA, SQYI…ILGG, LLVC…LAFL, ATMI…PILG, and AEII…YEHL.

The protein belongs to the MntP (TC 9.B.29) family.

Its subcellular location is the cell inner membrane. In terms of biological role, probably functions as a manganese efflux pump. The protein is Putative manganese efflux pump MntP of Pectobacterium atrosepticum (strain SCRI 1043 / ATCC BAA-672) (Erwinia carotovora subsp. atroseptica).